The primary structure comprises 353 residues: Nicotinate-nucleotide--dimethylbenzimidazole phosphoribosyltransferase (353 aa).

The active-site Proton acceptor is the Glu-319.

It belongs to the CobT family.

The catalysed reaction is 5,6-dimethylbenzimidazole + nicotinate beta-D-ribonucleotide = alpha-ribazole 5'-phosphate + nicotinate + H(+). The protein operates within nucleoside biosynthesis; alpha-ribazole biosynthesis; alpha-ribazole from 5,6-dimethylbenzimidazole: step 1/2. In terms of biological role, catalyzes the synthesis of alpha-ribazole-5'-phosphate from nicotinate mononucleotide (NAMN) and 5,6-dimethylbenzimidazole (DMB). The polypeptide is Nicotinate-nucleotide--dimethylbenzimidazole phosphoribosyltransferase (Syntrophobacter fumaroxidans (strain DSM 10017 / MPOB)).